Reading from the N-terminus, the 292-residue chain is Formamidopyrimidine-DNA glycosylase (292 aa).

Residue Pro2 is the Schiff-base intermediate with DNA of the active site. Residue Glu3 is the Proton donor of the active site. Lys61 (proton donor; for beta-elimination activity) is an active-site residue. DNA-binding residues include His96, Arg115, and Lys161. Residues 247-281 form an FPG-type zinc finger; that stretch reads SAYGQEDRPCPRCGTAIRREKFMNRSSFSCPKCQP. The active-site Proton donor; for delta-elimination activity is Arg271.

Belongs to the FPG family. As to quaternary structure, monomer. Zn(2+) serves as cofactor.

The catalysed reaction is Hydrolysis of DNA containing ring-opened 7-methylguanine residues, releasing 2,6-diamino-4-hydroxy-5-(N-methyl)formamidopyrimidine.. It carries out the reaction 2'-deoxyribonucleotide-(2'-deoxyribose 5'-phosphate)-2'-deoxyribonucleotide-DNA = a 3'-end 2'-deoxyribonucleotide-(2,3-dehydro-2,3-deoxyribose 5'-phosphate)-DNA + a 5'-end 5'-phospho-2'-deoxyribonucleoside-DNA + H(+). Involved in base excision repair of DNA damaged by oxidation or by mutagenic agents. Acts as a DNA glycosylase that recognizes and removes damaged bases. Has a preference for oxidized purines, such as 7,8-dihydro-8-oxoguanine (8-oxoG). Has AP (apurinic/apyrimidinic) lyase activity and introduces nicks in the DNA strand. Cleaves the DNA backbone by beta-delta elimination to generate a single-strand break at the site of the removed base with both 3'- and 5'-phosphates. This chain is Formamidopyrimidine-DNA glycosylase, found in Rhodococcus jostii (strain RHA1).